The primary structure comprises 218 residues: uncharacterized protein (218 aa).

The span at 184–202 (MDREEKRKEKEEKRKRELA) shows a compositional bias: basic and acidic residues. Residues 184 to 218 (MDREEKRKEKEEKRKRELAARQLKRQEKKKQKTSK) are disordered. Residues 205–218 (QLKRQEKKKQKTSK) are compositionally biased toward basic residues.

This is an uncharacterized protein from Mycoplasma pneumoniae (strain ATCC 29342 / M129 / Subtype 1) (Mycoplasmoides pneumoniae).